The chain runs to 36 residues: Protein P4 (36 aa).

The helical transmembrane segment at 13 to 33 threads the bilayer; sequence GLQLSLLICACLLAVLIVSFC.

The protein localises to the host membrane. This Vitis vinifera (Grape) protein is Protein P4.